Reading from the N-terminus, the 38-residue chain is Photosystem II reaction center protein L (38 aa).

The helical transmembrane segment at 17-37 threads the bilayer; that stretch reads SLYWGLLLIXVLAVLFSNYFF.

The protein belongs to the PsbL family. PSII is composed of 1 copy each of membrane proteins PsbA, PsbB, PsbC, PsbD, PsbE, PsbF, PsbH, PsbI, PsbJ, PsbK, PsbL, PsbM, PsbT, PsbX, PsbY, PsbZ, Psb30/Ycf12, at least 3 peripheral proteins of the oxygen-evolving complex and a large number of cofactors. It forms dimeric complexes.

It is found in the plastid. It localises to the chloroplast thylakoid membrane. In terms of biological role, one of the components of the core complex of photosystem II (PSII). PSII is a light-driven water:plastoquinone oxidoreductase that uses light energy to abstract electrons from H(2)O, generating O(2) and a proton gradient subsequently used for ATP formation. It consists of a core antenna complex that captures photons, and an electron transfer chain that converts photonic excitation into a charge separation. This subunit is found at the monomer-monomer interface and is required for correct PSII assembly and/or dimerization. This chain is Photosystem II reaction center protein L, found in Allium textile (Textile onion).